The primary structure comprises 1414 residues: DNA-directed RNA polymerase subunit beta' (1414 aa).

Zn(2+)-binding residues include cysteine 70, cysteine 72, cysteine 85, and cysteine 88. Mg(2+) contacts are provided by aspartate 460, aspartate 462, and aspartate 464. Residues cysteine 814, cysteine 888, cysteine 895, and cysteine 898 each coordinate Zn(2+). The interval glutamate 1378 to glutamate 1414 is disordered.

This sequence belongs to the RNA polymerase beta' chain family. In terms of assembly, the RNAP catalytic core consists of 2 alpha, 1 beta, 1 beta' and 1 omega subunit. When a sigma factor is associated with the core the holoenzyme is formed, which can initiate transcription. It depends on Mg(2+) as a cofactor. Zn(2+) is required as a cofactor.

The enzyme catalyses RNA(n) + a ribonucleoside 5'-triphosphate = RNA(n+1) + diphosphate. DNA-dependent RNA polymerase catalyzes the transcription of DNA into RNA using the four ribonucleoside triphosphates as substrates. In Bordetella bronchiseptica (strain ATCC BAA-588 / NCTC 13252 / RB50) (Alcaligenes bronchisepticus), this protein is DNA-directed RNA polymerase subunit beta'.